Consider the following 168-residue polypeptide: Crossover junction endodeoxyribonuclease RuvC (168 aa).

Residues aspartate 8, glutamate 68, and aspartate 140 contribute to the active site. Aspartate 8, glutamate 68, and aspartate 140 together coordinate Mg(2+).

Belongs to the RuvC family. In terms of assembly, homodimer which binds Holliday junction (HJ) DNA. The HJ becomes 2-fold symmetrical on binding to RuvC with unstacked arms; it has a different conformation from HJ DNA in complex with RuvA. In the full resolvosome a probable DNA-RuvA(4)-RuvB(12)-RuvC(2) complex forms which resolves the HJ. Mg(2+) is required as a cofactor.

Its subcellular location is the cytoplasm. It catalyses the reaction Endonucleolytic cleavage at a junction such as a reciprocal single-stranded crossover between two homologous DNA duplexes (Holliday junction).. Functionally, the RuvA-RuvB-RuvC complex processes Holliday junction (HJ) DNA during genetic recombination and DNA repair. Endonuclease that resolves HJ intermediates. Cleaves cruciform DNA by making single-stranded nicks across the HJ at symmetrical positions within the homologous arms, yielding a 5'-phosphate and a 3'-hydroxyl group; requires a central core of homology in the junction. The consensus cleavage sequence is 5'-(A/T)TT(C/G)-3'. Cleavage occurs on the 3'-side of the TT dinucleotide at the point of strand exchange. HJ branch migration catalyzed by RuvA-RuvB allows RuvC to scan DNA until it finds its consensus sequence, where it cleaves and resolves the cruciform DNA. The polypeptide is Crossover junction endodeoxyribonuclease RuvC (Lawsonia intracellularis (strain PHE/MN1-00)).